We begin with the raw amino-acid sequence, 452 residues long: Methionine aminopeptidase 2 (452 aa).

Positions Met1–Ile91 are disordered. Residues Glu8–Asp38 show a composition bias toward basic and acidic residues. Acidic residues predominate over residues Val39–Thr62. Residues Lys74–Ile91 are compositionally biased toward basic residues. Substrate is bound at residue His203. Positions 223, 234, and 305 each coordinate a divalent metal cation. His313 provides a ligand contact to substrate. A divalent metal cation-binding residues include Glu338 and Glu433.

It belongs to the peptidase M24A family. Methionine aminopeptidase eukaryotic type 2 subfamily. The cofactor is Co(2+). Requires Zn(2+) as cofactor. Mn(2+) serves as cofactor. Fe(2+) is required as a cofactor.

The protein resides in the cytoplasm. It carries out the reaction Release of N-terminal amino acids, preferentially methionine, from peptides and arylamides.. Cotranslationally removes the N-terminal methionine from nascent proteins. The N-terminal methionine is often cleaved when the second residue in the primary sequence is small and uncharged (Met-Ala-, Cys, Gly, Pro, Ser, Thr, or Val). This Candida dubliniensis (strain CD36 / ATCC MYA-646 / CBS 7987 / NCPF 3949 / NRRL Y-17841) (Yeast) protein is Methionine aminopeptidase 2.